A 296-amino-acid polypeptide reads, in one-letter code: NAD kinase (296 aa).

The Proton acceptor role is filled by Asp72. NAD(+)-binding positions include 72–73 (DG), 146–147 (ND), Arg157, Lys174, Asp176, 187–192 (TAYALS), and Gln247.

This sequence belongs to the NAD kinase family. The cofactor is a divalent metal cation.

The protein resides in the cytoplasm. It catalyses the reaction NAD(+) + ATP = ADP + NADP(+) + H(+). Its function is as follows. Involved in the regulation of the intracellular balance of NAD and NADP, and is a key enzyme in the biosynthesis of NADP. Catalyzes specifically the phosphorylation on 2'-hydroxyl of the adenosine moiety of NAD to yield NADP. The polypeptide is NAD kinase (Pseudomonas putida (strain W619)).